Here is a 322-residue protein sequence, read N- to C-terminus: Ferredoxin--NADP reductase (322 aa).

Residues D34, Q42, Y47, V87, F120, D279, and T320 each contribute to the FAD site.

Belongs to the ferredoxin--NADP reductase type 2 family. Homodimer. Requires FAD as cofactor.

It catalyses the reaction 2 reduced [2Fe-2S]-[ferredoxin] + NADP(+) + H(+) = 2 oxidized [2Fe-2S]-[ferredoxin] + NADPH. The protein is Ferredoxin--NADP reductase of Streptococcus pneumoniae (strain Hungary19A-6).